The following is a 469-amino-acid chain: Sulfate adenylyltransferase subunit 1 (469 aa).

The region spanning 22-238 (KQLLRFITCG…LETIKIDEDR (217 aa)) is the tr-type G domain. The G1 stretch occupies residues 31–38 (GSVDDGKS). 31-38 (GSVDDGKS) contributes to the GTP binding site. Residues 89-93 (GITID) are G2. A G3 region spans residues 110–113 (DTPG). Residues 110–114 (DTPGH) and 165–168 (NKMD) contribute to the GTP site. Residues 165 to 168 (NKMD) form a G4 region. Residues 203–205 (SAL) form a G5 region.

This sequence belongs to the TRAFAC class translation factor GTPase superfamily. Classic translation factor GTPase family. CysN/NodQ subfamily. As to quaternary structure, heterodimer composed of CysD, the smaller subunit, and CysN.

The enzyme catalyses sulfate + ATP + H(+) = adenosine 5'-phosphosulfate + diphosphate. It functions in the pathway sulfur metabolism; hydrogen sulfide biosynthesis; sulfite from sulfate: step 1/3. Its function is as follows. With CysD forms the ATP sulfurylase (ATPS) that catalyzes the adenylation of sulfate producing adenosine 5'-phosphosulfate (APS) and diphosphate, the first enzymatic step in sulfur assimilation pathway. APS synthesis involves the formation of a high-energy phosphoric-sulfuric acid anhydride bond driven by GTP hydrolysis by CysN coupled to ATP hydrolysis by CysD. This Aliarcobacter butzleri (strain RM4018) (Arcobacter butzleri) protein is Sulfate adenylyltransferase subunit 1.